Consider the following 628-residue polypeptide: Probable potassium transport system protein Kup 1 (628 aa).

12 helical membrane-spanning segments follow: residues 18 to 38 (ITLAALGVVYGDLGTSPLYAL), 58 to 78 (IVSLFFWTIMIVVSFKYVLLV), 106 to 126 (ALLMLLGLVGVGLFIGDAVIT), 141 to 161 (ITPELAPFVLPITLTVLVILF), 175 to 195 (FGPIMLLWFGVLAALGAYEIV), 219 to 239 (IAFITLGAVVLCVTGTEALYA), 253 to 273 (WGSLVMPALLLNYFGQGALLL), 285 to 305 (LLAPSWLAFPLLILATLATVI), 343 to 363 (IYLPLVNWLLLGGIIIVIIWF), 371 to 391 (AAYGIAVTGTMALTTLLLMVV), 401 to 421 (WLIALICAPLLLVDVTFFAAN), and 425 to 445 (FLAGGWLPILFALLAIIVMTT).

This sequence belongs to the HAK/KUP transporter (TC 2.A.72) family.

It is found in the cell inner membrane. The catalysed reaction is K(+)(in) + H(+)(in) = K(+)(out) + H(+)(out). Functionally, transport of potassium into the cell. Likely operates as a K(+):H(+) symporter. In Aeromonas hydrophila subsp. hydrophila (strain ATCC 7966 / DSM 30187 / BCRC 13018 / CCUG 14551 / JCM 1027 / KCTC 2358 / NCIMB 9240 / NCTC 8049), this protein is Probable potassium transport system protein Kup 1.